Consider the following 126-residue polypeptide: Aspartate 1-decarboxylase (126 aa).

Residue S25 is the Schiff-base intermediate with substrate; via pyruvic acid of the active site. The residue at position 25 (S25) is a Pyruvic acid (Ser). A substrate-binding site is contributed by T57. The active-site Proton donor is the Y58. A substrate-binding site is contributed by 73 to 75 (GAA).

It belongs to the PanD family. Heterooctamer of four alpha and four beta subunits. Pyruvate is required as a cofactor. Is synthesized initially as an inactive proenzyme, which is activated by self-cleavage at a specific serine bond to produce a beta-subunit with a hydroxyl group at its C-terminus and an alpha-subunit with a pyruvoyl group at its N-terminus.

It is found in the cytoplasm. It carries out the reaction L-aspartate + H(+) = beta-alanine + CO2. It functions in the pathway cofactor biosynthesis; (R)-pantothenate biosynthesis; beta-alanine from L-aspartate: step 1/1. In terms of biological role, catalyzes the pyruvoyl-dependent decarboxylation of aspartate to produce beta-alanine. The polypeptide is Aspartate 1-decarboxylase (Cronobacter sakazakii (strain ATCC BAA-894) (Enterobacter sakazakii)).